Consider the following 42-residue polypeptide: Tachystatin-B1 (42 aa).

Cystine bridges form between Cys-4-Cys-20, Cys-11-Cys-25, and Cys-19-Cys-37.

As to expression, granular hemocytes, small secretory granules.

Its subcellular location is the secreted. Its function is as follows. Exhibits stronger antimicrobial activity against the Gram-positive bacteria (S.aureus (IC(50) is 7.4 ug/ml)) and fungi (C.albicans (IC(50) is 3.0 ug/ml) and P.pastoris (IC(50) is 0.1 ug/ml)) than Gram-negative bacteria (E.coli no inhibition at 100 ug/ml). Binds to chitin (4.3 uM are required to obtain 50% of binding). Does not cause hemolysis on sheep erythrocytes. Has no blocking activity on the P-type calcium channel. The chain is Tachystatin-B1 from Tachypleus tridentatus (Japanese horseshoe crab).